The primary structure comprises 24 residues: Defensin D5 (24 aa).

This sequence belongs to the DEFL family. Group IV subfamily. In terms of tissue distribution, distributed in the epidermal cell layer of leaves and in the subepidermal layer region of stems. Not in roots.

Its subcellular location is the secreted. The protein resides in the cell wall. Antimicrobial peptide. Active against Fusarium spp., Gram-positive and Gram-negative bacterial pathogens. The sequence is that of Defensin D5 from Spinacia oleracea (Spinach).